The primary structure comprises 209 residues: Large ribosomal subunit protein uL3 (209 aa).

The interval 127-164 is disordered; the sequence is NFSGGQRTHGQSDRLRAPGSVGGASDPSRTFKGTKMGG.

Belongs to the universal ribosomal protein uL3 family. Part of the 50S ribosomal subunit. Forms a cluster with proteins L14 and L19.

In terms of biological role, one of the primary rRNA binding proteins, it binds directly near the 3'-end of the 23S rRNA, where it nucleates assembly of the 50S subunit. The chain is Large ribosomal subunit protein uL3 from Chlorobium phaeobacteroides (strain BS1).